A 143-amino-acid polypeptide reads, in one-letter code: Spliceosomal protein DIB1 (143 aa).

It belongs to the DIM1 family. Component of the 25S [U4/U6.U5] tri-snRNP.

It localises to the nucleus. In terms of biological role, essential role in pre-mRNA splicing. Also essential for entry into mitosis (G2/M progression) as well as for chromosome segregation during mitosis. The sequence is that of Spliceosomal protein DIB1 (DIB1) from Eremothecium gossypii (strain ATCC 10895 / CBS 109.51 / FGSC 9923 / NRRL Y-1056) (Yeast).